A 184-amino-acid polypeptide reads, in one-letter code: UPF0316 protein YebE (184 aa).

3 helical membrane passes run 9–29, 41–61, and 67–87; these read GIAMVLIILIINIVYVSFFTI, LAAGISTIEILVYVTGLSLVL, and IQNVIAYALGYGLGVIVGMKI.

The protein belongs to the UPF0316 family.

Its subcellular location is the cell membrane. This is UPF0316 protein YebE (yebE) from Bacillus subtilis (strain 168).